Consider the following 250-residue polypeptide: Ubiquinone/menaquinone biosynthesis C-methyltransferase UbiE (250 aa).

S-adenosyl-L-methionine-binding positions include Thr73, Asp94, 122–123 (NA), and Ser139.

The protein belongs to the class I-like SAM-binding methyltransferase superfamily. MenG/UbiE family.

The enzyme catalyses a 2-demethylmenaquinol + S-adenosyl-L-methionine = a menaquinol + S-adenosyl-L-homocysteine + H(+). The catalysed reaction is a 2-methoxy-6-(all-trans-polyprenyl)benzene-1,4-diol + S-adenosyl-L-methionine = a 5-methoxy-2-methyl-3-(all-trans-polyprenyl)benzene-1,4-diol + S-adenosyl-L-homocysteine + H(+). It participates in quinol/quinone metabolism; menaquinone biosynthesis; menaquinol from 1,4-dihydroxy-2-naphthoate: step 2/2. It functions in the pathway cofactor biosynthesis; ubiquinone biosynthesis. In terms of biological role, methyltransferase required for the conversion of demethylmenaquinol (DMKH2) to menaquinol (MKH2) and the conversion of 2-polyprenyl-6-methoxy-1,4-benzoquinol (DDMQH2) to 2-polyprenyl-3-methyl-6-methoxy-1,4-benzoquinol (DMQH2). The chain is Ubiquinone/menaquinone biosynthesis C-methyltransferase UbiE from Francisella tularensis subsp. novicida (strain U112).